The following is a 285-amino-acid chain: Glutamate racemase (285 aa).

Residues 28–29 (DS) and 60–61 (YG) each bind substrate. Cys92 serves as the catalytic Proton donor/acceptor. A substrate-binding site is contributed by 93–94 (NT). Cys204 acts as the Proton donor/acceptor in catalysis. Substrate is bound at residue 205–206 (TH).

It belongs to the aspartate/glutamate racemases family.

It catalyses the reaction L-glutamate = D-glutamate. Its pathway is cell wall biogenesis; peptidoglycan biosynthesis. In terms of biological role, provides the (R)-glutamate required for cell wall biosynthesis. This is Glutamate racemase from Escherichia coli O6:H1 (strain CFT073 / ATCC 700928 / UPEC).